A 247-amino-acid chain; its full sequence is uncharacterized protein (247 aa).

Residues leucine 19, aspartate 38, aspartate 63, and valine 64 each contribute to the NAD(+) site. Serine 142 lines the substrate pocket. Residues tyrosine 155, lysine 159, and serine 190 each coordinate NAD(+). Tyrosine 155 (proton acceptor) is an active-site residue.

This sequence belongs to the short-chain dehydrogenases/reductases (SDR) family.

This is an uncharacterized protein from Mycobacterium bovis (strain ATCC BAA-935 / AF2122/97).